A 711-amino-acid polypeptide reads, in one-letter code: MKRLTYPLSSLRNIVEHFHCNTFHKPISSLSISPTLKSESREPSSTQDPYSLLKQDPVDICLSLWVKSFSSPPSATFSNLTGFLSKFDLWVLAYQRTCAHVTGTFPPRNAIHANALRSLLSLQNAVTRSGGKFRWNDKMNQYVRSPKDKISMNGGEGMSKGKVRRIIESEEPIFQDRVVHEVLLMILEPFFEARFSSKSHGFRPGRNPHTVIRTIRSNFAGYLWFMKGDVSEMLDHVDVDVVMNCLQKVVKDRKVLGLIESSLKFSDKRVLKRVVEKHGNDNGLGTKRRIEREKRNKTKKKILSDDEPKPDPYWLRTFYSFAPKEAAKVPSYGYCGVLSPLLANVCLNELDRFMETKIVEYFSPCKDDSIWKESIEDGCHNPAWPEFVPSSGKEKTRKMDYIRYGGHFLIGIRGPREDAVKMRKEIIDFCDRVFGVRLDNSKLEIEHISRGIQFLDHIICRRVIYPTLRYTGSGGSIVSKKGVGTLLSVSASLEQCIRQFRRLAFVKGDKDPEPLPCNPMLYSSQSHSNSQMNKFLETMADWYKYADNRKKAVGFCAYVIRSSLAKLYAARYRLKSRAKVYSIASRDLSHPLSESSNNSAPEYSDLLRMGLVDAIEGVQFSRMSLIPSCDYTPFPRNWIPNHEQVLQEYIRLQDPKFFCGLHRSIKREGLTLPQDEISEAVWDFKTLGAWRSKYENKREADDGLQKLDSQT.

A Reverse transcriptase domain is found at Lys-147 to Ile-459. An intron maturase type-2 region spans residues Gly-484–Gln-653.

It belongs to the plant nuclear intron maturase (nMat) family. Expressed at low levels in seedlings and accumulates in adult plants.

It is found in the mitochondrion. Functionally, nuclear-encoded maturase required for splicing of group-II introns in mitochondria. Necessary for mitochondrial biogenesis during early developmental stages. Involved in the splicing of mitochondrial NAD4 transcripts. Required for trans-splicing of NAD1 intron 1 and also functions in cis-splicing of NAD2 intron 1 and NAD4 intron 2. Required for the regulation of fundamental metabolic pathways such as amino acid metabolism, triacylglycerol degradation and polysaccharide synthesis (cellulose and starch) during the early stage of plant growth. Implicated in stress responses. In Arabidopsis thaliana (Mouse-ear cress), this protein is Nuclear intron maturase 1, mitochondrial.